A 452-amino-acid polypeptide reads, in one-letter code: Gastrin/cholecystokinin type B receptor (452 aa).

Residues 1–57 (MELLKLNRSLPGPGPGAALCRPEGPLLNGSGAGNLSCEPPRIRGAGTRELELAVRIT) lie on the Extracellular side of the membrane. N-linked (GlcNAc...) asparagine glycosylation is found at N7, N28, and N34. A helical transmembrane segment spans residues 58 to 78 (LYAAIFLMSVAGNVLIIVVLG). Topologically, residues 79–99 (LSRRLRTVTNAFLLSLAVSDL) are cytoplasmic. The chain crosses the membrane as a helical span at residues 100-120 (LLAVACMPFTLLPNLMGTFIF). At 121-127 (GTVVCKA) the chain is on the extracellular side. Residues C125 and C203 are joined by a disulfide bond. Residues 128 to 148 (VSYFMGVSVSVSTLSLVAIAL) traverse the membrane as a helical segment. At 149–171 (ERYSAICRPLQARVWQTRSHAAR) the chain is on the cytoplasmic side. Residues 172–192 (VIVATWMLSGLLMVPYPVYTA) form a helical membrane-spanning segment. Residues 193-218 (VQPAGPRVLQCMHRWPSARIRQTWSV) are Extracellular-facing. Residues 219 to 239 (LLLLLLFFVPGVVMAVAYGLI) traverse the membrane as a helical segment. The Cytoplasmic portion of the chain corresponds to 240–339 (SRELYLGLRF…LLAKKRVVRM (100 aa)). The segment at 256-285 (ESQSQVGSQGGLPGGAGQGPAHPNGHCRSE) is disordered. The span at 263–273 (SQGGLPGGAGQ) shows a compositional bias: gly residues. The helical transmembrane segment at 340–360 (LLVIVVLFFLCWLPVYSANTW) threads the bilayer. Residues 361 to 376 (RAFDGPGAHRALSGAP) are Extracellular-facing. Residues 377-397 (ISFIHLLSYASACVNPLVYCF) form a helical membrane-spanning segment. At 398–452 (MHRRFRQACLDTCARCCPRPPRARPRPLPDEDPPTPSIASLSRLSYTTISTLGPG) the chain is on the cytoplasmic side. C413 carries the S-palmitoyl cysteine lipid modification.

This sequence belongs to the G-protein coupled receptor 1 family.

It localises to the cell membrane. In terms of biological role, receptor for gastrin and cholecystokinin. The CCK-B receptors occur throughout the central nervous system where they modulate anxiety, analgesia, arousal, and neuroleptic activity. This receptor mediates its action by association with G proteins that activate a phosphatidylinositol-calcium second messenger system. The polypeptide is Gastrin/cholecystokinin type B receptor (Sus scrofa (Pig)).